The following is a 103-amino-acid chain: Co-chaperonin GroES (103 aa).

The protein belongs to the GroES chaperonin family. In terms of assembly, heptamer of 7 subunits arranged in a ring. Interacts with the chaperonin GroEL.

Its subcellular location is the cytoplasm. Its function is as follows. Together with the chaperonin GroEL, plays an essential role in assisting protein folding. The GroEL-GroES system forms a nano-cage that allows encapsulation of the non-native substrate proteins and provides a physical environment optimized to promote and accelerate protein folding. GroES binds to the apical surface of the GroEL ring, thereby capping the opening of the GroEL channel. This is Co-chaperonin GroES from Synechococcus sp. (strain JA-2-3B'a(2-13)) (Cyanobacteria bacterium Yellowstone B-Prime).